The primary structure comprises 156 residues: Probable cyclic pyranopterin monophosphate synthase (156 aa).

Residues 74-76 and 110-111 contribute to the substrate site; these read LCH and ME. Asp-125 is a catalytic residue.

This sequence belongs to the MoaC family. Homohexamer; trimer of dimers.

It catalyses the reaction (8S)-3',8-cyclo-7,8-dihydroguanosine 5'-triphosphate = cyclic pyranopterin phosphate + diphosphate. It participates in cofactor biosynthesis; molybdopterin biosynthesis. In terms of biological role, catalyzes the conversion of (8S)-3',8-cyclo-7,8-dihydroguanosine 5'-triphosphate to cyclic pyranopterin monophosphate (cPMP). The polypeptide is Probable cyclic pyranopterin monophosphate synthase (Thermococcus kodakarensis (strain ATCC BAA-918 / JCM 12380 / KOD1) (Pyrococcus kodakaraensis (strain KOD1))).